The primary structure comprises 186 residues: Probable GPI-anchored cupredoxin ARB_05732-1 (186 aa).

An N-terminal signal peptide occupies residues 1 to 18 (MVNMNILTTVALAGLAAA). Histidine 55 contributes to the Cu cation binding site. The cysteines at positions 66 and 104 are disulfide-linked. The N-linked (GlcNAc...) asparagine glycan is linked to asparagine 87. Cu cation is bound by residues cysteine 98 and histidine 103. The disordered stretch occupies residues 130–160 (GAGNGQAPSRVNNGSSGSGTPTSGGAPAATS). A glycan (N-linked (GlcNAc...) asparagine) is linked at asparagine 142. Residues 143–160 (GSSGSGTPTSGGAPAATS) show a composition bias toward low complexity. The GPI-anchor amidated glycine moiety is linked to residue glycine 153. Residues 154–186 (GAPAATSPNAASSLTFSGAAALVAMGGAWIGLL) constitute a propeptide, removed in mature form.

This sequence belongs to the multicopper oxidase family. Requires Cu cation as cofactor.

It is found in the cell membrane. Its subcellular location is the secreted. Probable electron transfer copper protein that serves as a direct electron donor. In Arthroderma benhamiae (strain ATCC MYA-4681 / CBS 112371) (Trichophyton mentagrophytes), this protein is Probable GPI-anchored cupredoxin ARB_05732-1.